A 355-amino-acid chain; its full sequence is Uroporphyrinogen decarboxylase (355 aa).

Residues 38–42 (RQAGR), aspartate 87, tyrosine 162, serine 217, and histidine 331 each bind substrate.

This sequence belongs to the uroporphyrinogen decarboxylase family. Homodimer.

It localises to the cytoplasm. The catalysed reaction is uroporphyrinogen III + 4 H(+) = coproporphyrinogen III + 4 CO2. It functions in the pathway porphyrin-containing compound metabolism; protoporphyrin-IX biosynthesis; coproporphyrinogen-III from 5-aminolevulinate: step 4/4. Functionally, catalyzes the decarboxylation of four acetate groups of uroporphyrinogen-III to yield coproporphyrinogen-III. The chain is Uroporphyrinogen decarboxylase from Streptomyces avermitilis (strain ATCC 31267 / DSM 46492 / JCM 5070 / NBRC 14893 / NCIMB 12804 / NRRL 8165 / MA-4680).